The primary structure comprises 251 residues: NADH-quinone oxidoreductase subunit C (251 aa).

Positions 1 to 34 (MSDANNTAGDANEVNPEKDLSAENLPGQRGQGGE) are disordered.

The protein belongs to the complex I 30 kDa subunit family. NDH-1 is composed of 14 different subunits. Subunits NuoB, C, D, E, F, and G constitute the peripheral sector of the complex.

It is found in the cell membrane. It carries out the reaction a quinone + NADH + 5 H(+)(in) = a quinol + NAD(+) + 4 H(+)(out). NDH-1 shuttles electrons from NADH, via FMN and iron-sulfur (Fe-S) centers, to quinones in the respiratory chain. The immediate electron acceptor for the enzyme in this species is believed to be a menaquinone. Couples the redox reaction to proton translocation (for every two electrons transferred, four hydrogen ions are translocated across the cytoplasmic membrane), and thus conserves the redox energy in a proton gradient. In Streptomyces coelicolor (strain ATCC BAA-471 / A3(2) / M145), this protein is NADH-quinone oxidoreductase subunit C.